Consider the following 2295-residue polypeptide: Protein DOP1B (2295 aa).

2 positions are modified to phosphoserine: Ser-556 and Ser-597. 4 disordered regions span residues 574-599 (AGDE…SSPE), 651-684 (GEEN…DPKP), 1034-1059 (CKEA…QFTT), and 1092-1136 (DLPD…LQDL). The span at 1111 to 1131 (ADTSSGHTDSENTSTFSSPSH) shows a compositional bias: polar residues. Ser-1167 is subject to Phosphoserine.

The protein belongs to the DOP1 family. As to quaternary structure, homooligomer. Heterotrimer with ATP9A and MON2; this interaction is retromer-independent. Interacts with SNX3. As to expression, expressed in liver, heart and brain.

It is found in the early endosome membrane. It localises to the golgi apparatus membrane. Functionally, may play a role in regulating membrane trafficking of cargo proteins. Together with ATP9A and MON2, regulates SNX3 retromer-mediated endosomal sorting of WLS away from lysosomal degradation. In Mus musculus (Mouse), this protein is Protein DOP1B (Dop1b).